The sequence spans 69 residues: Nodulin-3 (69 aa).

Positions 1-24 are cleaved as a signal peptide; the sequence is MAKILKFVFAIILFFSLFLLSMEA.

This Pisum sativum (Garden pea) protein is Nodulin-3 (ENOD3).